Here is a 1387-residue protein sequence, read N- to C-terminus: DNA-directed RNA polymerase subunit beta (1387 aa).

It belongs to the RNA polymerase beta chain family. As to quaternary structure, the RNAP catalytic core consists of 2 alpha, 1 beta, 1 beta' and 1 omega subunit. When a sigma factor is associated with the core the holoenzyme is formed, which can initiate transcription.

The enzyme catalyses RNA(n) + a ribonucleoside 5'-triphosphate = RNA(n+1) + diphosphate. In terms of biological role, DNA-dependent RNA polymerase catalyzes the transcription of DNA into RNA using the four ribonucleoside triphosphates as substrates. The polypeptide is DNA-directed RNA polymerase subunit beta (Xanthomonas campestris pv. campestris (strain ATCC 33913 / DSM 3586 / NCPPB 528 / LMG 568 / P 25)).